Consider the following 141-residue polypeptide: Large ribosomal subunit protein uL11 (141 aa).

Belongs to the universal ribosomal protein uL11 family. Part of the ribosomal stalk of the 50S ribosomal subunit. Interacts with L10 and the large rRNA to form the base of the stalk. L10 forms an elongated spine to which L12 dimers bind in a sequential fashion forming a multimeric L10(L12)X complex. In terms of processing, one or more lysine residues are methylated.

Its function is as follows. Forms part of the ribosomal stalk which helps the ribosome interact with GTP-bound translation factors. The protein is Large ribosomal subunit protein uL11 of Lactobacillus delbrueckii subsp. bulgaricus (strain ATCC 11842 / DSM 20081 / BCRC 10696 / JCM 1002 / NBRC 13953 / NCIMB 11778 / NCTC 12712 / WDCM 00102 / Lb 14).